We begin with the raw amino-acid sequence, 47 residues long: Delta-actitoxin-Axm1d (47 aa).

3 disulfide bridges follow: C4/C44, C6/C34, and C27/C45.

This sequence belongs to the sea anemone sodium channel inhibitory toxin family. Type I subfamily.

Its subcellular location is the secreted. The protein resides in the nematocyst. In terms of biological role, binds specifically to voltage-gated sodium channels (Nav), thereby delaying their inactivation during signal transduction. Thus it strongly stimulates mammalian cardiac muscle contraction. This Anthopleura xanthogrammica (Giant green sea anemone) protein is Delta-actitoxin-Axm1d.